The chain runs to 716 residues: Mitochondrial Rho GTPase 1 (716 aa).

The Cytoplasmic segment spans residues 1–692 (MSPDAIRVVV…VSVDQDDIKH (692 aa)). The 222-residue stretch at 3 to 224 (PDAIRVVVCG…FYLCQRAVTH (222 aa)) folds into the Miro 1 domain. A disordered region spans residues 58 to 99 (NDQDHHHHHQSSPSTMKNKRKHNNKRERERERESSINNVQPN). GTP-binding positions include 84–91 (ERERERES), 113–115 (DTS), and 167–170 (NKSD). The 36-residue stretch at 240–275 (GAIKPLKRIFWLSDTDQDGYLNFEELSELHKKCFGI) folds into the EF-hand 1 domain. The Ca(2+) site is built by aspartate 253, aspartate 255, aspartate 257, tyrosine 259, and glutamate 264. The segment at 303–327 (TQTPPQQQHLATSAGTPNGTTTTTS) is disordered. The EF-hand 2 domain occupies 388–423 (TGYKFFVDLFIKFDKDNDGGLNEDELNTLFRSTPGI). 4 residues coordinate Ca(2+): aspartate 401, aspartate 403, aspartate 405, and glutamate 412. Positions 505–671 (RNVFNCFIVG…FIQLVDAAKT (167 aa)) constitute a Miro 2 domain. Residues 514–521 (GAPKAGKS), 550–554 (ELRGG), and 620–623 (LKAD) each bind GTP. Residues 693 to 713 (IIMTGAAIAVVGLVSIWVLNS) traverse the membrane as a helical; Anchor for type IV membrane protein segment. The Mitochondrial intermembrane segment spans residues 714–716 (LRR).

Belongs to the mitochondrial Rho GTPase family.

It is found in the mitochondrion outer membrane. In terms of biological role, mitochondrial GTPase involved in mitochondrial trafficking. Probably involved in control of anterograde transport of mitochondria and their subcellular distribution. In Candida albicans (strain SC5314 / ATCC MYA-2876) (Yeast), this protein is Mitochondrial Rho GTPase 1 (GEM1).